Reading from the N-terminus, the 31-residue chain is Hemocyanin subunit 2 (31 aa).

It belongs to the tyrosinase family. Hemocyanin subfamily. In terms of tissue distribution, hemolymph.

The protein resides in the secreted. It localises to the extracellular space. Functionally, hemocyanins are copper-containing oxygen carriers occurring freely dissolved in the hemolymph of many mollusks and arthropods. This chain is Hemocyanin subunit 2, found in Maja squinado (Mediterranean spider crab).